The following is a 408-amino-acid chain: Multidrug resistance protein MdtG (408 aa).

11 helical membrane passes run 16–36 (LIVAWLGCFLTGAAFSLVMPF), 58–78 (IVFSITFLFSAIASPFWGGLA), 92–112 (LGMGIVMVLMGLAQNIWQFLI), 115–135 (ALLGLLGGFVPNANALIATQV), 146–166 (TLSTGGVSGALLGPMAGGLLA), 173–193 (PVFFITASVLILCFFVTLFCI), 224–244 (LFVTTLIIQVATGSIAPILTL), 256–276 (VAFISGMIASVPGVAALLSAP), 290–310 (ILITALIFSVLLLIPMSYVQT), 319–339 (FLLGAADGALLPAVQTLLVYN), and 378–398 (AVFLVTAGVVLFNAVYSWNSL).

Belongs to the major facilitator superfamily. DHA1 family. MdtG (TC 2.A.1.2.20) subfamily.

It localises to the cell inner membrane. Confers resistance to fosfomycin and deoxycholate. This chain is Multidrug resistance protein MdtG, found in Escherichia coli O81 (strain ED1a).